The following is a 366-amino-acid chain: tRNA pseudouridine synthase B (366 aa).

The Nucleophile role is filled by Asp44.

The protein belongs to the pseudouridine synthase TruB family. Type 1 subfamily.

It carries out the reaction uridine(55) in tRNA = pseudouridine(55) in tRNA. In terms of biological role, responsible for synthesis of pseudouridine from uracil-55 in the psi GC loop of transfer RNAs. This chain is tRNA pseudouridine synthase B, found in Treponema pallidum (strain Nichols).